The chain runs to 171 residues: Putative auxin-responsive protein IAA29 (171 aa).

A PB1 domain is found at 19–114; sequence SRFVKVFMHG…TVKKIYIVPA (96 aa). Positions 117–171 are disordered; it reads QNENDYQEEEEDNAAAAATADEDGDGAAADDGVAAAADDVDDVAGYTSNDDPSFD. Residues 142–153 show a composition bias toward low complexity; that stretch reads GAAADDGVAAAA. Residues 162 to 171 show a composition bias toward polar residues; it reads YTSNDDPSFD.

It belongs to the Aux/IAA family. Homodimers and heterodimers.

The protein localises to the nucleus. In terms of biological role, aux/IAA proteins are short-lived transcriptional factors that function as repressors of early auxin response genes at low auxin concentrations. This is Putative auxin-responsive protein IAA29 (IAA29) from Oryza sativa subsp. japonica (Rice).